The following is a 397-amino-acid chain: Odorant receptor 22a (397 aa).

The Cytoplasmic portion of the chain corresponds to methionine 1–lysine 49. A helical transmembrane segment spans residues leucine 50–glutamate 70. Topologically, residues tyrosine 71–serine 86 are extracellular. The chain crosses the membrane as a helical span at residues leucine 87–phenylalanine 107. At lysine 108–tyrosine 136 the chain is on the cytoplasmic side. The chain crosses the membrane as a helical span at residues valine 137 to methionine 157. Residues asparagine 158 to glutamine 182 are Extracellular-facing. Residues phenylalanine 183 to cysteine 203 traverse the membrane as a helical segment. The Cytoplasmic portion of the chain corresponds to threonine 204–proline 263. A helical membrane pass occupies residues valine 264–leucine 280. The Extracellular portion of the chain corresponds to glycine 281–asparagine 286. A helical transmembrane segment spans residues leucine 287–phenylalanine 304. The Cytoplasmic portion of the chain corresponds to aspartate 305 to glutamine 356. Residues proline 357–valine 377 traverse the membrane as a helical segment. Over lysine 378 to glutamine 397 the chain is Extracellular.

The protein belongs to the insect chemoreceptor superfamily. Heteromeric odorant receptor channel (TC 1.A.69) family. Or2a subfamily. As to quaternary structure, interacts with Orco, via conserved C-terminal cytoplasmic loops. Complexes exist early in the endomembrane system in olfactory sensory neurons (OSNs), coupling these complexes to the conserved ciliary trafficking pathway. Interacts with snmp1. As to expression, expressed with Orco in 17-20 sensory neurons on the medial-proximal edge of the antenna. Expressed in the ab3A neuron which responds to ethyl butyrate.

Its subcellular location is the cell membrane. In terms of biological role, odorant receptor which mediates acceptance or avoidance behavior, depending on its substrates. The odorant receptor repertoire encodes a large collection of odor stimuli that vary widely in identity, intensity, and duration. Involved in the behavioral responses ethyl butyrate and to esters in more general. Complexes with Orco to form odorant-sensing units, providing sensitive and prolonged odorant signaling and calcium permeability. They are necessary and sufficient to promote functional reconstitution of odor-evoked signaling in sensory neurons that normally respond only to carbon dioxide. The protein is Odorant receptor 22a (Or22a) of Drosophila melanogaster (Fruit fly).